Reading from the N-terminus, the 168-residue chain is CASP-like protein 1U1 (168 aa).

The Cytoplasmic segment spans residues 1 to 6; the sequence is MDGAAR. A helical membrane pass occupies residues 7-27; it reads AVSLFFRIAVVGLSVAAAVVM. The Extracellular portion of the chain corresponds to 28–49; it reads ATASQAFPFNYGGAVSYTKYPA. A helical membrane pass occupies residues 50–70; that stretch reads FVYFVVAAVVSAVCSAAALYL. The Cytoplasmic segment spans residues 71-80; that stretch reads SVVREAAAGW. The chain crosses the membrane as a helical span at residues 81–101; it reads AVALLDVVTMGLLFSAAGAVF. Residues 102–138 are Extracellular-facing; that stretch reads AVRRMAPLYLGVAGADTVAGRWVNGEFCHAAGAFCWR. Residues 139–159 traverse the membrane as a helical segment; sequence VTTSAIICAFAAAAVSVAVLT. The Cytoplasmic segment spans residues 160–168; sequence KGARHRGKH.

The protein belongs to the Casparian strip membrane proteins (CASP) family. Homodimer and heterodimers.

Its subcellular location is the cell membrane. The sequence is that of CASP-like protein 1U1 from Oryza sativa subsp. japonica (Rice).